We begin with the raw amino-acid sequence, 122 residues long: Glycine cleavage system H protein (122 aa).

The Lipoyl-binding domain occupies 19–101 (TATIGITKHA…EGNSWLYKIK (83 aa)). At lysine 60 the chain carries N6-lipoyllysine.

Belongs to the GcvH family. As to quaternary structure, the glycine cleavage system is composed of four proteins: P, T, L and H. The cofactor is (R)-lipoate.

The glycine cleavage system catalyzes the degradation of glycine. The H protein shuttles the methylamine group of glycine from the P protein to the T protein. The polypeptide is Glycine cleavage system H protein (Dinoroseobacter shibae (strain DSM 16493 / NCIMB 14021 / DFL 12)).